The primary structure comprises 872 residues: G-type lectin S-receptor-like serine/threonine-protein kinase At5g35370 (872 aa).

The first 26 residues, 1 to 26, serve as a signal peptide directing secretion; it reads MKSTFLLLLLLLSLNLLFVFVSCASS. Over 27–443 the chain is Extracellular; it reads IEFVYPNFTA…NNNRGGSSFP (417 aa). Residues N33, N148, and N239 are each glycosylated (N-linked (GlcNAc...) asparagine). The 122-residue stretch at 35–156 folds into the Bulb-type lectin domain; that stretch reads TASNLRFVDS…LNVSLWESFD (122 aa). The region spanning 283 to 322 is the EGF-like; atypical domain; that stretch reads PMDSCQIPFVCGKLGLCNLDNASENQSCSCPDEMRMDAGK. Disulfide bonds link C287–C299 and C293–C310. N-linked (GlcNAc...) asparagine glycosylation is found at N303, N307, N342, N379, and N389. The PAN domain maps to 338 to 423; it reads CEARNISYLE…HDLIGYVKLS (86 aa). Cystine bridges form between C372–C394 and C376–C382. Residues 444–464 traverse the membrane as a helical segment; that stretch reads VIALVLLPCSGFFLLIALGLL. Topologically, residues 465–872 are cytoplasmic; it reads WWRRCAVMRY…IASQEVSGPR (408 aa). Residues 515–814 enclose the Protein kinase domain; sequence ENFKMQIGSG…GSIPLGNPRM (300 aa). ATP is bound by residues 521–529 and K543; that span reads IGSGGFGSV. A caM-binding region spans residues 603 to 620; it reads GNGPVLEWQERFDIALGT. D639 (proton acceptor) is an active-site residue. At S656 the chain carries Phosphoserine. The residue at position 673 (T673) is a Phosphothreonine. S716 and S859 each carry phosphoserine. The disordered stretch occupies residues 836-872; the sequence is QNGESETMVFHRRESSNSGGSRQSASYIASQEVSGPR. The span at 851-861 shows a compositional bias: low complexity; the sequence is SNSGGSRQSAS. Residues 862–872 show a composition bias toward polar residues; that stretch reads YIASQEVSGPR.

This sequence belongs to the protein kinase superfamily. Ser/Thr protein kinase family.

Its subcellular location is the cell membrane. It catalyses the reaction L-seryl-[protein] + ATP = O-phospho-L-seryl-[protein] + ADP + H(+). It carries out the reaction L-threonyl-[protein] + ATP = O-phospho-L-threonyl-[protein] + ADP + H(+). This is G-type lectin S-receptor-like serine/threonine-protein kinase At5g35370 from Arabidopsis thaliana (Mouse-ear cress).